Reading from the N-terminus, the 128-residue chain is Large ribosomal subunit protein bL17 (128 aa).

It belongs to the bacterial ribosomal protein bL17 family. As to quaternary structure, part of the 50S ribosomal subunit. Contacts protein L32.

The chain is Large ribosomal subunit protein bL17 from Tolumonas auensis (strain DSM 9187 / NBRC 110442 / TA 4).